The sequence spans 386 residues: N-acetylneuraminate epimerase (386 aa).

The N-terminal stretch at 1–29 (MGMQMKNSKKMMTLMALCLSVAITTSGYA) is a signal peptide. Kelch repeat units lie at residues 51 to 95 (VIYV…VFLN), 97 to 149 (ELYV…VKLN), 151 to 186 (TMAL…RVIY), 187 to 232 (NYFN…AMEN), 235 to 284 (LTLI…LAGA), 306 to 355 (QNYT…NYGD), and 357 to 386 (IFLI…LLIE). E241 acts as the Proton acceptor in catalysis.

The protein belongs to the NanM family. As to quaternary structure, homodimer.

It localises to the periplasm. The catalysed reaction is N-acetyl-alpha-neuraminate = N-acetyl-beta-neuraminate. Converts alpha-N-acetylneuranimic acid (Neu5Ac) to the beta-anomer, accelerating the equilibrium between the alpha- and beta-anomers. Probably facilitates sialidase-negative bacteria to compete successfully for limited amounts of extracellular Neu5Ac, which is likely taken up in the beta-anomer. In addition, the rapid removal of sialic acid from solution might be advantageous to the bacterium to damp down host responses. The chain is N-acetylneuraminate epimerase from Salmonella arizonae (strain ATCC BAA-731 / CDC346-86 / RSK2980).